The following is a 486-amino-acid chain: Kynurenine 3-monooxygenase (486 aa).

Residues Val-19, Tyr-37–Arg-40, and Ala-57 contribute to the FAD site. 2 residues coordinate L-kynurenine: Arg-85 and Tyr-99. Residues Arg-111, Leu-136, Thr-172, Asp-304, and Met-317 to Asn-318 contribute to the FAD site. Residues Asn-363 and Tyr-398 each contribute to the L-kynurenine site. 2 consecutive transmembrane segments (helical) span residues Phe-385–Ser-404 and Gly-425–Met-445. A glycan (N-linked (GlcNAc...) asparagine) is linked at Asn-465.

Belongs to the aromatic-ring hydroxylase family. KMO subfamily. The cofactor is FAD. As to expression, highest levels in placenta and liver. Detectable in kidney.

The protein resides in the mitochondrion outer membrane. It carries out the reaction L-kynurenine + NADPH + O2 + H(+) = 3-hydroxy-L-kynurenine + NADP(+) + H2O. It participates in cofactor biosynthesis; NAD(+) biosynthesis; quinolinate from L-kynurenine: step 1/3. In terms of biological role, catalyzes the hydroxylation of L-kynurenine (L-Kyn) to form 3-hydroxy-L-kynurenine (L-3OHKyn). Required for synthesis of quinolinic acid, a neurotoxic NMDA receptor antagonist and potential endogenous inhibitor of NMDA receptor signaling in axonal targeting, synaptogenesis and apoptosis during brain development. Quinolinic acid may also affect NMDA receptor signaling in pancreatic beta cells, osteoblasts, myocardial cells, and the gastrointestinal tract. In Homo sapiens (Human), this protein is Kynurenine 3-monooxygenase.